We begin with the raw amino-acid sequence, 297 residues long: Large ribosomal subunit protein uL3 (297 aa).

Disordered regions lie at residues 124–143 (NQKI…PVRQ) and 258–297 (MKEK…DKGE).

It belongs to the universal ribosomal protein uL3 family. Part of the 50S ribosomal subunit. Forms a cluster with proteins L14 and L19.

Functionally, one of the primary rRNA binding proteins, it binds directly near the 3'-end of the 23S rRNA, where it nucleates assembly of the 50S subunit. This is Large ribosomal subunit protein uL3 from Mycoplasma mobile (strain ATCC 43663 / 163K / NCTC 11711) (Mesomycoplasma mobile).